The primary structure comprises 87 residues: Precursor of CEP8 (87 aa).

An N-terminal signal peptide occupies residues 1-29 (MAKALFFNFCISLLIIAILVSHEIIPTEA). Positions 30–72 (RHLRTHRKSIKNSTLTVHEGAGGLRTGGGSVKTDISKEEHGVD) are excised as a propeptide. N41 carries an N-linked (GlcNAc...) asparagine glycan. Positions 41–87 (NSTLTVHEGAGGLRTGGGSVKTDISKEEHGVDEFRPTTPGNSPGIGH) are disordered. Residues 49–59 (GAGGLRTGGGS) are compositionally biased toward gly residues. The span at 63–75 (DISKEEHGVDEFR) shows a compositional bias: basic and acidic residues. P76, P79, and P83 each carry hydroxyproline.

Belongs to the C-terminally encoded plant signaling peptide (CEP) family. Interacts with CEP receptors (e.g. CEPR1 and CEPR2). The mature small signaling peptide is generated by proteolytic processing of the longer precursor. As to expression, expressed in lateral root primordia and in lateral roots excluding the meristem region. Also present in the aerial tissues, such as leaf petioles and the shoot apex region.

It is found in the secreted. Its subcellular location is the extracellular space. The protein localises to the apoplast. Extracellular signaling peptide that may regulate primary root growth rate and systemic nitrogen (N)-demand signaling. Mediates up-regulation of genes involved in N uptake and assimilation pathways. The protein is Precursor of CEP8 of Arabidopsis thaliana (Mouse-ear cress).